The primary structure comprises 122 residues: Large ribosomal subunit protein uL14 (122 aa).

The protein belongs to the universal ribosomal protein uL14 family. In terms of assembly, part of the 50S ribosomal subunit. Forms a cluster with proteins L3 and L19. In the 70S ribosome, L14 and L19 interact and together make contacts with the 16S rRNA in bridges B5 and B8.

In terms of biological role, binds to 23S rRNA. Forms part of two intersubunit bridges in the 70S ribosome. This is Large ribosomal subunit protein uL14 from Bartonella bacilliformis (strain ATCC 35685 / KC583 / Herrer 020/F12,63).